The following is a 199-amino-acid chain: UPF0462 protein C4orf33 (199 aa).

This sequence belongs to the UPF0462 family.

In Homo sapiens (Human), this protein is UPF0462 protein C4orf33 (C4orf33).